Reading from the N-terminus, the 509-residue chain is Putative aldehyde dehydrogenase family 7 member A1 homolog (509 aa).

Glycine 244–glycine 249 contacts NAD(+). The active-site Proton acceptor is glutamate 266. Cysteine 300 acts as the Nucleophile in catalysis.

This sequence belongs to the aldehyde dehydrogenase family. In terms of assembly, homotetramer.

The enzyme catalyses an aldehyde + NAD(+) + H2O = a carboxylate + NADH + 2 H(+). The chain is Putative aldehyde dehydrogenase family 7 member A1 homolog from Dictyostelium discoideum (Social amoeba).